Consider the following 120-residue polypeptide: NAD(P)H-quinone oxidoreductase subunit 3, chloroplastic (120 aa).

Transmembrane regions (helical) follow at residues 9–29, 64–84, and 88–108; these read IFWA…LISG, MFAL…PWAM, and VLGV…IVGS.

This sequence belongs to the complex I subunit 3 family. In terms of assembly, NDH is composed of at least 16 different subunits, 5 of which are encoded in the nucleus.

It localises to the plastid. It is found in the chloroplast thylakoid membrane. The catalysed reaction is a plastoquinone + NADH + (n+1) H(+)(in) = a plastoquinol + NAD(+) + n H(+)(out). It catalyses the reaction a plastoquinone + NADPH + (n+1) H(+)(in) = a plastoquinol + NADP(+) + n H(+)(out). Functionally, NDH shuttles electrons from NAD(P)H:plastoquinone, via FMN and iron-sulfur (Fe-S) centers, to quinones in the photosynthetic chain and possibly in a chloroplast respiratory chain. The immediate electron acceptor for the enzyme in this species is believed to be plastoquinone. Couples the redox reaction to proton translocation, and thus conserves the redox energy in a proton gradient. This is NAD(P)H-quinone oxidoreductase subunit 3, chloroplastic from Carica papaya (Papaya).